Here is a 158-residue protein sequence, read N- to C-terminus: 2-C-methyl-D-erythritol 2,4-cyclodiphosphate synthase (158 aa).

2 residues coordinate a divalent metal cation: aspartate 9 and histidine 11. 4-CDP-2-C-methyl-D-erythritol 2-phosphate contacts are provided by residues 9 to 11 (DVH) and 35 to 36 (HS). Residue histidine 43 participates in a divalent metal cation binding. 4-CDP-2-C-methyl-D-erythritol 2-phosphate-binding positions include 57 to 59 (DIG), 62 to 66 (FPDTD), 101 to 107 (AQAPKMA), 133 to 136 (TTTE), phenylalanine 140, and arginine 143.

It belongs to the IspF family. As to quaternary structure, homotrimer. Requires a divalent metal cation as cofactor.

It catalyses the reaction 4-CDP-2-C-methyl-D-erythritol 2-phosphate = 2-C-methyl-D-erythritol 2,4-cyclic diphosphate + CMP. It participates in isoprenoid biosynthesis; isopentenyl diphosphate biosynthesis via DXP pathway; isopentenyl diphosphate from 1-deoxy-D-xylulose 5-phosphate: step 4/6. Its function is as follows. Involved in the biosynthesis of isopentenyl diphosphate (IPP) and dimethylallyl diphosphate (DMAPP), two major building blocks of isoprenoid compounds. Catalyzes the conversion of 4-diphosphocytidyl-2-C-methyl-D-erythritol 2-phosphate (CDP-ME2P) to 2-C-methyl-D-erythritol 2,4-cyclodiphosphate (ME-CPP) with a corresponding release of cytidine 5-monophosphate (CMP). This is 2-C-methyl-D-erythritol 2,4-cyclodiphosphate synthase from Vibrio cholerae serotype O1 (strain ATCC 39541 / Classical Ogawa 395 / O395).